The primary structure comprises 138 residues: Putative nickel-responsive regulator (138 aa).

Residues H78, H89, H91, and C97 each coordinate Ni(2+).

It belongs to the transcriptional regulatory CopG/NikR family. Ni(2+) serves as cofactor.

Its function is as follows. Transcriptional regulator. This chain is Putative nickel-responsive regulator, found in Thermococcus kodakarensis (strain ATCC BAA-918 / JCM 12380 / KOD1) (Pyrococcus kodakaraensis (strain KOD1)).